The primary structure comprises 250 residues: Small ribosomal subunit protein uS3 (250 aa).

The KH type-2 domain occupies 39–111 (IRTLIKNHYP…KIQINIFEVK (73 aa)).

Belongs to the universal ribosomal protein uS3 family. In terms of assembly, part of the 30S ribosomal subunit. Forms a tight complex with proteins S10 and S14.

Binds the lower part of the 30S subunit head. Binds mRNA in the 70S ribosome, positioning it for translation. The protein is Small ribosomal subunit protein uS3 of Elm witches'-broom phytoplasma.